The following is a 519-amino-acid chain: Cytochrome P450 monooxygenase FPY7 (519 aa).

The helical transmembrane segment at 12 to 34 threads the bilayer; sequence SLSLRWKIIVTLLAIYTLRIIGT. Cys-465 is a binding site for heme.

This sequence belongs to the cytochrome P450 family. The cofactor is heme.

It localises to the membrane. The protein operates within secondary metabolite biosynthesis. In terms of biological role, cytochrome P450 monooxygenase; part of the gene cluster that mediates the biosynthesis of the gamma-pyrones fusapyrone (FPY) and deoxyfusapyrone (dFPY). FPY is an undecaketide and thus likely synthesized by the polyketide synthase FPY1 from acetyl-CoA functioning as starter unit and the addition of 10 malonyl-CoA extender units by successive Claisen-condensations. Next to this, FPY shares some rare features: C-glycosylated 4-deoxyglucose at C-3, a gem-dimethyl group at C-13, and an alpha-beta to beta-gamma double bond shift at C-20. During FPY biosynthesis mono-C-methyl groups are transferred to the tetra-, penta-, hexa- and heptaketide, while two C-methyl groups are transferred to the nonaketide, suggesting that the CMet domain is programmed to selectively catalyze two successive C-alpha-methylation reactions of the nonaketide, while other alpha-carbons are non- or mono-methylated only. While the origin of the 4'-deoxyglucose moiety remains opaque, its transfer to C-3 is most likely mediated by the C-glycosyltransferase FPY2. Next to this, the hydroxyl group present at C-33 and discriminating between FPY and dFPY, is likely to be installed by the cytochrome P450 monooxygenase FPY7. No putative function can be predicted for the remaining genes FPY3-FPY6. The polypeptide is Cytochrome P450 monooxygenase FPY7 (Fusarium mangiferae (Mango malformation disease fungus)).